Consider the following 315-residue polypeptide: tRNA pseudouridine synthase B (315 aa).

Asp54 (nucleophile) is an active-site residue.

The protein belongs to the pseudouridine synthase TruB family. Type 1 subfamily.

It carries out the reaction uridine(55) in tRNA = pseudouridine(55) in tRNA. Functionally, responsible for synthesis of pseudouridine from uracil-55 in the psi GC loop of transfer RNAs. The polypeptide is tRNA pseudouridine synthase B (Cupriavidus pinatubonensis (strain JMP 134 / LMG 1197) (Cupriavidus necator (strain JMP 134))).